The primary structure comprises 453 residues: Cytochrome b-c1 complex subunit 2, mitochondrial (453 aa).

The transit peptide at 1-14 (MKLLSRAGSFSRFY) directs the protein to the mitochondrion. N6-acetyllysine is present on residues lysine 66, lysine 199, and lysine 250. At serine 368 the chain carries Phosphoserine.

Belongs to the peptidase M16 family. UQCRC2/QCR2 subfamily. As to quaternary structure, component of the ubiquinol-cytochrome c oxidoreductase (cytochrome b-c1 complex, complex III, CIII), a multisubunit enzyme composed of 11 subunits. The complex is composed of 3 respiratory subunits cytochrome b, cytochrome c1 and Rieske protein UQCRFS1, 2 core protein subunits UQCRC1/QCR1 and UQCRC2/QCR2, and 6 low-molecular weight protein subunits UQCRH/QCR6, UQCRB/QCR7, UQCRQ/QCR8, UQCR10/QCR9, UQCR11/QCR10 and subunit 9, the cleavage product of Rieske protein UQCRFS1. The complex exists as an obligatory dimer and forms supercomplexes (SCs) in the inner mitochondrial membrane with NADH-ubiquinone oxidoreductase (complex I, CI) and cytochrome c oxidase (complex IV, CIV), resulting in different assemblies (supercomplex SCI(1)III(2)IV(1) and megacomplex MCI(2)III(2)IV(2)). Interacts with RAB5IF. Interacts with STMP1. Acetylation of Lys-159 and Lys-250 is observed in liver mitochondria from fasted mice but not from fed mice. Expressed in neurons and astrocytes of the cerebral cortex and hippocampus (at protein level).

It localises to the mitochondrion inner membrane. Its function is as follows. Component of the ubiquinol-cytochrome c oxidoreductase, a multisubunit transmembrane complex that is part of the mitochondrial electron transport chain which drives oxidative phosphorylation. The respiratory chain contains 3 multisubunit complexes succinate dehydrogenase (complex II, CII), ubiquinol-cytochrome c oxidoreductase (cytochrome b-c1 complex, complex III, CIII) and cytochrome c oxidase (complex IV, CIV), that cooperate to transfer electrons derived from NADH and succinate to molecular oxygen, creating an electrochemical gradient over the inner membrane that drives transmembrane transport and the ATP synthase. The cytochrome b-c1 complex catalyzes electron transfer from ubiquinol to cytochrome c, linking this redox reaction to translocation of protons across the mitochondrial inner membrane, with protons being carried across the membrane as hydrogens on the quinol. In the process called Q cycle, 2 protons are consumed from the matrix, 4 protons are released into the intermembrane space and 2 electrons are passed to cytochrome c. The 2 core subunits UQCRC1/QCR1 and UQCRC2/QCR2 are homologous to the 2 mitochondrial-processing peptidase (MPP) subunits beta-MPP and alpha-MPP respectively, and they seem to have preserved their MPP processing properties. May be involved in the in situ processing of UQCRFS1 into the mature Rieske protein and its mitochondrial targeting sequence (MTS)/subunit 9 when incorporated into complex III. The polypeptide is Cytochrome b-c1 complex subunit 2, mitochondrial (Uqcrc2) (Mus musculus (Mouse)).